The primary structure comprises 433 residues: Shufflon protein C' (433 aa).

A constant region region spans residues 1 to 361 (MKKYDRGWAS…TGAILSCQSG (361 aa)). The segment at 362–433 (RWSGGNKINY…HVDAYCCPFN (72 aa)) is variable region.

The chain is Shufflon protein C' from Escherichia coli.